The chain runs to 150 residues: MEGTRSRVRITVEAEVRPTEDREKVLKAVRNVVEPESVRFEKIGSTEILVGESSTLASLSRLHSILRAERILDAARGAMKKGVQGADRMTIHLHKQAAYKGRLSFVSSDHESPMGAIRITIEHPNVREVIDWLAPPTVRGRPVFERRMPE.

This sequence belongs to the UPF0201 family.

This is UPF0201 protein APE_1751 from Aeropyrum pernix (strain ATCC 700893 / DSM 11879 / JCM 9820 / NBRC 100138 / K1).